Here is a 232-residue protein sequence, read N- to C-terminus: Octanoyltransferase (232 aa).

A BPL/LPL catalytic domain is found at glutamate 44–leucine 219. Substrate-binding positions include arginine 83 to histidine 90, alanine 150 to glycine 152, and glycine 163 to serine 165. Cysteine 181 functions as the Acyl-thioester intermediate in the catalytic mechanism.

Belongs to the LipB family.

The protein resides in the cytoplasm. The catalysed reaction is octanoyl-[ACP] + L-lysyl-[protein] = N(6)-octanoyl-L-lysyl-[protein] + holo-[ACP] + H(+). It participates in protein modification; protein lipoylation via endogenous pathway; protein N(6)-(lipoyl)lysine from octanoyl-[acyl-carrier-protein]: step 1/2. In terms of biological role, catalyzes the transfer of endogenously produced octanoic acid from octanoyl-acyl-carrier-protein onto the lipoyl domains of lipoate-dependent enzymes. Lipoyl-ACP can also act as a substrate although octanoyl-ACP is likely to be the physiological substrate. This is Octanoyltransferase from Xanthomonas campestris pv. campestris (strain B100).